We begin with the raw amino-acid sequence, 442 residues long: D-serine dehydratase (442 aa).

Lysine 118 bears the N6-(pyridoxal phosphate)lysine mark.

Belongs to the serine/threonine dehydratase family. DsdA subfamily. In terms of assembly, monomer. Pyridoxal 5'-phosphate serves as cofactor.

The catalysed reaction is D-serine = pyruvate + NH4(+). This is D-serine dehydratase from Shigella sonnei (strain Ss046).